The primary structure comprises 512 residues: MKLFVLIALFGLGFAQHNPNTRDGRTAIVHLFEWRWADIAAECERFLGPKGFAGVQISPPNEHILVSSPWRPWWQRYQPISYNLCSRSGGENELRDMITRCNNVGVNVYVDAVINHMCGAGGGEGTHSSCGSWFNANNKDFPSVPYSNLDFNDGKCKTGSGNIENYGDPYQVRDCRLVGLLDLALEKDYVRGKVADFMNKLIDMGVAGFRVDACKHMWPGDLDNVYRRLNNLNTKWFPGGSRPFIFQEVIDLGGEPITTGEYVGLGRVTEFKYGARLGELFRKWNGQKLSYTKNWGEGWGFMADGNAVVFTDNHDNQRGHGAGGASILTFWDPRLYKMAVGYMLAHPYGFTRVMSSYSWDRNFVNGKDENDWIGPPSNGDGSTKPVPINPDQTCGDGWVCEHRWRQIMNMVQFRNVVNGQPHANWWDNGNNQVAFGRGNRGFIVFNNDDWALDVTLNTGLPGGTYCDVISGNKDGGSCTGKQITVGGDGRAHFYINNSEEDPFIAIHADSKL.

The signal sequence occupies residues 1–15 (MKLFVLIALFGLGFA). Intrachain disulfides connect Cys43/Cys101, Cys85/Cys130, and Cys156/Cys175. The Ca(2+) site is built by Asn115, Arg173, and Asp182. Arg210 lines the chloride pocket. Asp212 (nucleophile) is an active-site residue. His216 is a binding site for Ca(2+). Glu248 serves as the catalytic Proton donor. Position 352 (Arg352) interacts with chloride. 2 disulfides stabilise this stretch: Cys394–Cys400 and Cys466–Cys478. Asn496 carries N-linked (GlcNAc...) asparagine glycosylation.

The protein belongs to the glycosyl hydrolase 13 family. It depends on Ca(2+) as a cofactor. The cofactor is chloride.

Its subcellular location is the secreted. The catalysed reaction is Endohydrolysis of (1-&gt;4)-alpha-D-glucosidic linkages in polysaccharides containing three or more (1-&gt;4)-alpha-linked D-glucose units.. In terms of biological role, catalyzes the hydrolysis of alpha-1,4 glycosidic linkages in starch, glycogen and similar oligosaccharides. This is Alpha-amylase from Oryzias latipes (Japanese rice fish).